The following is a 301-amino-acid chain: Putative S-adenosyl-L-methionine-dependent methyltransferase Mflv_5024 (301 aa).

S-adenosyl-L-methionine is bound by residues Asp129 and 158 to 159 (DL).

It belongs to the UPF0677 family.

In terms of biological role, exhibits S-adenosyl-L-methionine-dependent methyltransferase activity. This Mycolicibacterium gilvum (strain PYR-GCK) (Mycobacterium gilvum (strain PYR-GCK)) protein is Putative S-adenosyl-L-methionine-dependent methyltransferase Mflv_5024.